Consider the following 65-residue polypeptide: Large ribosomal subunit protein uL30 (65 aa).

Belongs to the universal ribosomal protein uL30 family. Part of the 50S ribosomal subunit.

This Mycobacterium bovis (strain ATCC BAA-935 / AF2122/97) protein is Large ribosomal subunit protein uL30.